Here is a 122-residue protein sequence, read N- to C-terminus: Ribonuclease P protein component (122 aa).

Belongs to the RnpA family. As to quaternary structure, consists of a catalytic RNA component (M1 or rnpB) and a protein subunit.

It catalyses the reaction Endonucleolytic cleavage of RNA, removing 5'-extranucleotides from tRNA precursor.. Its function is as follows. RNaseP catalyzes the removal of the 5'-leader sequence from pre-tRNA to produce the mature 5'-terminus. It can also cleave other RNA substrates such as 4.5S RNA. The protein component plays an auxiliary but essential role in vivo by binding to the 5'-leader sequence and broadening the substrate specificity of the ribozyme. The protein is Ribonuclease P protein component of Synechococcus elongatus (strain ATCC 33912 / PCC 7942 / FACHB-805) (Anacystis nidulans R2).